The following is a 122-amino-acid chain: Beta-2-microglobulin (122 aa).

A signal peptide spans 1–23 (MFLRSTFVAALVACLAYIHLGDA). In terms of domain architecture, Ig-like C1-type spans 28 to 117 (PKVQIYSRNV…STLREATRFT (90 aa)). Cys-48 and Cys-103 form a disulfide bridge.

It belongs to the beta-2-microglobulin family. In terms of assembly, heterodimer of an alpha chain and a beta chain. Beta-2-microglobulin is the beta-chain of major histocompatibility complex class I molecules.

It is found in the secreted. Its function is as follows. Component of the class I major histocompatibility complex (MHC). Involved in the presentation of peptide antigens to the immune system. This is Beta-2-microglobulin (b2m) from Acipenser baerii (Siberian sturgeon).